The following is a 346-amino-acid chain: tRNA N6-adenosine threonylcarbamoyltransferase (346 aa).

The Fe cation site is built by His111 and His115. Residues Leu134 to Gly138, Asp167, Gly180, and Asn279 each bind substrate. Position 307 (Asp307) interacts with Fe cation.

It belongs to the KAE1 / TsaD family. Fe(2+) is required as a cofactor.

It is found in the cytoplasm. It catalyses the reaction L-threonylcarbamoyladenylate + adenosine(37) in tRNA = N(6)-L-threonylcarbamoyladenosine(37) in tRNA + AMP + H(+). Its function is as follows. Required for the formation of a threonylcarbamoyl group on adenosine at position 37 (t(6)A37) in tRNAs that read codons beginning with adenine. Is involved in the transfer of the threonylcarbamoyl moiety of threonylcarbamoyl-AMP (TC-AMP) to the N6 group of A37, together with TsaE and TsaB. TsaD likely plays a direct catalytic role in this reaction. This Burkholderia thailandensis (strain ATCC 700388 / DSM 13276 / CCUG 48851 / CIP 106301 / E264) protein is tRNA N6-adenosine threonylcarbamoyltransferase.